The chain runs to 191 residues: Holliday junction branch migration complex subunit RuvA (191 aa).

Positions 1–64 (MIGRITGTLA…EDAHLLYGFG (64 aa)) are domain I. A domain II region spans residues 65–138 (SEVERAAFRE…KGKPVFAGAL (74 aa)). Residues 138–141 (LASV) form a flexible linker region. A domain III region spans residues 142–191 (PSAGASDDVRQALLALGYNERETAATVRELPAGLAVGEAIRQALRALSRA).

The protein belongs to the RuvA family. As to quaternary structure, homotetramer. Forms an RuvA(8)-RuvB(12)-Holliday junction (HJ) complex. HJ DNA is sandwiched between 2 RuvA tetramers; dsDNA enters through RuvA and exits via RuvB. An RuvB hexamer assembles on each DNA strand where it exits the tetramer. Each RuvB hexamer is contacted by two RuvA subunits (via domain III) on 2 adjacent RuvB subunits; this complex drives branch migration. In the full resolvosome a probable DNA-RuvA(4)-RuvB(12)-RuvC(2) complex forms which resolves the HJ.

The protein localises to the cytoplasm. In terms of biological role, the RuvA-RuvB-RuvC complex processes Holliday junction (HJ) DNA during genetic recombination and DNA repair, while the RuvA-RuvB complex plays an important role in the rescue of blocked DNA replication forks via replication fork reversal (RFR). RuvA specifically binds to HJ cruciform DNA, conferring on it an open structure. The RuvB hexamer acts as an ATP-dependent pump, pulling dsDNA into and through the RuvAB complex. HJ branch migration allows RuvC to scan DNA until it finds its consensus sequence, where it cleaves and resolves the cruciform DNA. This Thiobacillus denitrificans (strain ATCC 25259 / T1) protein is Holliday junction branch migration complex subunit RuvA.